The following is a 512-amino-acid chain: ATP synthase subunit alpha (512 aa).

169 to 176 is a binding site for ATP; sequence GDRQTGKT.

It belongs to the ATPase alpha/beta chains family. As to quaternary structure, F-type ATPases have 2 components, CF(1) - the catalytic core - and CF(0) - the membrane proton channel. CF(1) has five subunits: alpha(3), beta(3), gamma(1), delta(1), epsilon(1). CF(0) has four main subunits: a(1), b(1), b'(1) and c(9-12).

Its subcellular location is the cell inner membrane. The enzyme catalyses ATP + H2O + 4 H(+)(in) = ADP + phosphate + 5 H(+)(out). Its function is as follows. Produces ATP from ADP in the presence of a proton gradient across the membrane. The alpha chain is a regulatory subunit. This Cereibacter sphaeroides (strain ATCC 17025 / ATH 2.4.3) (Rhodobacter sphaeroides) protein is ATP synthase subunit alpha.